The chain runs to 393 residues: uncharacterized protein (393 aa).

Topologically, residues 1–17 are cytoplasmic; that stretch reads MVSKDQTSFNKRWTLGL. A helical membrane pass occupies residues 18–38; sequence LMLGLVIILWVLSSFLINLIF. Over 39–46 the chain is Vacuolar; the sequence is EDDSYRKP. Residues 47 to 67 traverse the membrane as a helical segment; it reads FFITYTNTAAFIFYLFPTAKA. At 68–132 the chain is on the cytoplasmic side; it reads VVVNYKDTGR…LYETIKLSAE (65 aa). Ser-93 carries the phosphoserine modification. Residues 133 to 153 traverse the membrane as a helical segment; it reads FCILWFTANLVTNASLAFTSV. At 154 to 156 the chain is on the vacuolar side; sequence ASQ. A helical membrane pass occupies residues 157–176; the sequence is TILSTTSSFFTLFIGAICHV. Over 177–182 the chain is Cytoplasmic; it reads ESLSKS. A helical membrane pass occupies residues 183–200; it reads KVLGSFISFVGIIMVTKS. Topologically, residues 201–219 are vacuolar; it reads DSHQRYQRHIADVSGDDND. A helical membrane pass occupies residues 220–240; it reads AVQVLIGNLLALAGAVLYGVY. The Cytoplasmic portion of the chain corresponds to 241–257; that stretch reads STLLKREVGDETRVNMK. Residues 258 to 278 form a helical membrane-spanning segment; it reads IFFGFVGLFNLLFLWPSLIVL. The Vacuolar segment spans residues 279–292; it reads DFFGWEPFSLPKDP. A helical membrane pass occupies residues 293–313; that stretch reads KVVVIIFVNCLITFVSDFCWA. The Cytoplasmic portion of the chain corresponds to 314–321; that stretch reads KAMLLTSP. A helical transmembrane segment spans residues 322–342; that stretch reads LTVTVGLSITIPLAMFGDVIF. Residues 343–345 are Vacuolar-facing; sequence KHK. The helical transmembrane segment at 346–366 threads the bilayer; it reads TMSALYLFGATLILGSFFIIN. Over 367 to 393 the chain is Cytoplasmic; sequence KSSEEEHFENSITASNYESVEVPAANN.

It belongs to the TPT transporter family.

The protein localises to the vacuole membrane. This is an uncharacterized protein from Saccharomyces cerevisiae (strain ATCC 204508 / S288c) (Baker's yeast).